Here is a 248-residue protein sequence, read N- to C-terminus: DNA repair protein RecO (248 aa).

Belongs to the RecO family.

Involved in DNA repair and RecF pathway recombination. The protein is DNA repair protein RecO of Streptomyces avermitilis (strain ATCC 31267 / DSM 46492 / JCM 5070 / NBRC 14893 / NCIMB 12804 / NRRL 8165 / MA-4680).